Reading from the N-terminus, the 288-residue chain is Damage-control phosphatase AF_1104 (288 aa).

The short motif at 7 to 10 is the Subfamily I CxxC motif element; it reads CPSC. Residues Asp-160, Asn-161, and Asp-194 each coordinate Mn(2+). Positions 247–250 match the Subfamily I GNFE-like motif motif; it reads ANYE. The Subfamily I KC motif signature appears at 267-268; the sequence is KC.

It belongs to the damage-control phosphatase family. Nucleotides phosphatase I subfamily. Requires [2Fe-2S] cluster as cofactor. Mn(2+) serves as cofactor. It depends on Ni(2+) as a cofactor.

Functionally, metal-dependent phosphatase with probable damage-control functions. Could hydrolyze oxidatively damaged purine nucleotides or their biosynthetic intermediates. The protein is Damage-control phosphatase AF_1104 of Archaeoglobus fulgidus (strain ATCC 49558 / DSM 4304 / JCM 9628 / NBRC 100126 / VC-16).